Reading from the N-terminus, the 249-residue chain is ATP synthase subunit a, chloroplastic (249 aa).

5 helical membrane-spanning segments follow: residues 40-60, 97-117, 136-156, 201-221, and 222-242; these read QVLITSWVVIAILLGSAVLAI, VPFIGTLFLFIFVSNWSGALL, INTTVALALLTSVAYFYAGLS, LVVVVLVSLVPLVVPIPVMFL, and GLFTSGIQALIFATLAAAYIG.

The protein belongs to the ATPase A chain family. As to quaternary structure, F-type ATPases have 2 components, CF(1) - the catalytic core - and CF(0) - the membrane proton channel. CF(1) has five subunits: alpha(3), beta(3), gamma(1), delta(1), epsilon(1). CF(0) has four main subunits: a, b, b' and c.

It is found in the plastid. It localises to the chloroplast thylakoid membrane. In terms of biological role, key component of the proton channel; it plays a direct role in the translocation of protons across the membrane. The sequence is that of ATP synthase subunit a, chloroplastic from Lepidium virginicum (Virginia pepperweed).